Consider the following 147-residue polypeptide: Formiminotransferase N-terminal subdomain-containing protein (147 aa).

Positions methionine 1 to alanine 20 are cleaved as a signal peptide.

The protein belongs to the formiminotransferase family. As to expression, widely expressed with highest levels in liver and skeletal muscle, and moderate levels in kidney, bone and pancreas.

The sequence is that of Formiminotransferase N-terminal subdomain-containing protein (FTCDNL1) from Homo sapiens (Human).